Reading from the N-terminus, the 309-residue chain is Olfactory receptor 1A1 (309 aa).

Residues 1–25 (MRENNQSSTLEFILLGVTGQQEQED) lie on the Extracellular side of the membrane. A glycan (N-linked (GlcNAc...) asparagine) is linked at Asn-5. The helical transmembrane segment at 26–49 (FFYILFLFIYPITLIGNLLIVLAI) threads the bilayer. The Cytoplasmic segment spans residues 50–57 (CSDVRLHN). Residues 58–79 (PMYFLLANLSLVDIFFSSVTIP) traverse the membrane as a helical segment. Residues 80–100 (KMLANHLLGSKSISFGGCLTQ) are Extracellular-facing. A disulfide bridge connects residues Cys-97 and Cys-189. A helical transmembrane segment spans residues 101 to 120 (MYFMIALGNTDSYILAAMAY). Topologically, residues 121–139 (DRAVAISRPLHYTTIMSPR) are cytoplasmic. Residues 140–158 (SCIWLIAGSWVIGNANALP) form a helical membrane-spanning segment. Residues 159–195 (HTLLTASLSFCGNQEVANFYCDITPLLKLSCSDIHFH) lie on the Extracellular side of the membrane. A helical membrane pass occupies residues 196–218 (VKMMYLGVGIFSVPLLCIIVSYI). Residues 219–235 (RVFSTVFQVPSTKGVLK) are Cytoplasmic-facing. A helical transmembrane segment spans residues 236–258 (AFSTCGSHLTVVSLYYGTVMGTY). The Extracellular portion of the chain corresponds to 259-270 (FRPLTNYSLKDA). Asn-264 carries N-linked (GlcNAc...) asparagine glycosylation. Residues 271–290 (VITVMYTAVTPMLNPFIYSL) form a helical membrane-spanning segment. Residues 291–309 (RNRDMKAALRKLFNKRISS) lie on the Cytoplasmic side of the membrane.

The protein belongs to the G-protein coupled receptor 1 family.

It is found in the cell membrane. Its function is as follows. Odorant receptor. This chain is Olfactory receptor 1A1 (OR1A1), found in Homo sapiens (Human).